A 188-amino-acid chain; its full sequence is Elongation factor P (188 aa).

Belongs to the elongation factor P family.

Its subcellular location is the cytoplasm. Its pathway is protein biosynthesis; polypeptide chain elongation. In terms of biological role, involved in peptide bond synthesis. Stimulates efficient translation and peptide-bond synthesis on native or reconstituted 70S ribosomes in vitro. Probably functions indirectly by altering the affinity of the ribosome for aminoacyl-tRNA, thus increasing their reactivity as acceptors for peptidyl transferase. The sequence is that of Elongation factor P from Sulfurovum sp. (strain NBC37-1).